The primary structure comprises 217 residues: MDQQGQSSAMNYGSNPYQTNAMTTTPTGSDHPAYHQIHQQQQQQLTQQLQSFWETQFKEIEKTTDFKNHSLPLARIKKIMKADEDVRMISAEAPVVFARACEMFILELTLRSWNHTEENKRRTLQKNDIAAAVTRTDIFDFLVDIVPREDLRDEVLGGVGAEAATAAGYPYGYLPPGTAPIGNPGMVMGNPGAYPPNPYMGQPMWQQPGPEQQDPDN.

The segment covering 1-28 (MDQQGQSSAMNYGSNPYQTNAMTTTPTG) has biased composition (polar residues). 2 disordered regions span residues 1 to 29 (MDQQ…PTGS) and 198 to 217 (PYMG…DPDN).

Belongs to the NFYC/HAP5 subunit family. As to quaternary structure, heterotrimeric transcription factor composed of three components, NF-YA, NF-YB and NF-YC. NF-YB and NF-YC must interact and dimerize for NF-YA association and DNA binding. Ubiquitous.

The protein localises to the nucleus. In terms of biological role, stimulates the transcription of various genes by recognizing and binding to a CCAAT motif in promoters. The protein is Nuclear transcription factor Y subunit C-3 (NFYC3) of Arabidopsis thaliana (Mouse-ear cress).